A 680-amino-acid chain; its full sequence is Meiotic recombination protein REC8 (680 aa).

Low complexity-rich tracts occupy residues 278–290 (ENDN…GGED) and 436–446 (SLVSTQSSSST). 3 disordered regions span residues 278 to 297 (ENDN…ENEG), 431 to 467 (RKRA…YSSD), and 540 to 560 (EQNF…GSQQ). The segment covering 550 to 560 (SNSCFSDGSQQ) has biased composition (polar residues).

It belongs to the rad21 family. In terms of processing, proteolytically cleaved by ESP1. Post-translationally, phosphorylated by CDC5. CDC5 phosphorylation is necessary for cleavage by ESP1 and subsequent removal from chromosome arms.

The protein resides in the nucleus. It localises to the chromosome. The protein localises to the centromere. Its function is as follows. Replaces the SCC1 mitosis-specific cohesin to ensure sister chromatid cohesion during meiosis. Is cleaved by ESP1 shortly before the first meiotic division, and dissociates from chromatin, allowing sister chromatids to segregate. Is protected from cleavage by SPO13. Promotes localization of the LINC complex subunit MPS3 on nuclear envelope in mitotic cells. The polypeptide is Meiotic recombination protein REC8 (Saccharomyces cerevisiae (strain ATCC 204508 / S288c) (Baker's yeast)).